Here is an 867-residue protein sequence, read N- to C-terminus: Alanine--tRNA ligase (867 aa).

Residues His-554, His-558, Cys-656, and His-660 each contribute to the Zn(2+) site.

This sequence belongs to the class-II aminoacyl-tRNA synthetase family. It depends on Zn(2+) as a cofactor.

It is found in the cytoplasm. It catalyses the reaction tRNA(Ala) + L-alanine + ATP = L-alanyl-tRNA(Ala) + AMP + diphosphate. Its function is as follows. Catalyzes the attachment of alanine to tRNA(Ala) in a two-step reaction: alanine is first activated by ATP to form Ala-AMP and then transferred to the acceptor end of tRNA(Ala). Also edits incorrectly charged Ser-tRNA(Ala) and Gly-tRNA(Ala) via its editing domain. The chain is Alanine--tRNA ligase from Methylococcus capsulatus (strain ATCC 33009 / NCIMB 11132 / Bath).